Here is a 36-residue protein sequence, read N- to C-terminus: Conotoxin Bt11.4 (36 aa).

Cystine bridges form between Cys-2–Cys-16, Cys-9–Cys-21, Cys-15–Cys-26, and Cys-20–Cys-33.

Belongs to the conotoxin I1 superfamily. In terms of tissue distribution, expressed by the venom duct.

The protein localises to the secreted. In Conus betulinus (Beech cone), this protein is Conotoxin Bt11.4.